The sequence spans 128 residues: Small ribosomal subunit protein uS9 (128 aa).

The tract at residues 107-128 is disordered; it reads RAVERKKPGRPKARKRFQFSKR. Positions 113-128 are enriched in basic residues; the sequence is KPGRPKARKRFQFSKR.

This sequence belongs to the universal ribosomal protein uS9 family.

This chain is Small ribosomal subunit protein uS9, found in Parabacteroides distasonis (strain ATCC 8503 / DSM 20701 / CIP 104284 / JCM 5825 / NCTC 11152).